Here is a 241-residue protein sequence, read N- to C-terminus: Orotidine 5'-phosphate decarboxylase (241 aa).

Substrate-binding positions include Asp-18, Lys-39, 66 to 75 (DLKFHDIPAT), Thr-130, Arg-192, Gln-201, Gly-221, and Arg-222. Lys-68 (proton donor) is an active-site residue.

It belongs to the OMP decarboxylase family. Type 1 subfamily. As to quaternary structure, homodimer.

The catalysed reaction is orotidine 5'-phosphate + H(+) = UMP + CO2. Its pathway is pyrimidine metabolism; UMP biosynthesis via de novo pathway; UMP from orotate: step 2/2. Catalyzes the decarboxylation of orotidine 5'-monophosphate (OMP) to uridine 5'-monophosphate (UMP). The chain is Orotidine 5'-phosphate decarboxylase from Synechococcus sp. (strain CC9605).